A 521-amino-acid polypeptide reads, in one-letter code: Anaerobic nitric oxide reductase flavorubredoxin (521 aa).

A zinc metallo-hydrolase region spans residues 30-210 (HKGTSYNSYL…PFSPLVTAKI (181 aa)). Fe cation-binding residues include His-79, Glu-81, Asp-83, His-147, Asp-166, and His-227. Residues 254-393 (ITLFYDSMSN…LCREHGRQLA (140 aa)) form the Flavodoxin-like domain. FMN is bound by residues 260–264 (SMSNN) and 342–369 (AFGSYGWTGGAVDRIQTRLMDAGFDISI). The 52-residue stretch at 464–515 (DQPMLCTVCQWIYDPALGEPDQLVAPGTPWARVPDSFLCPGCGIGKEVFEPC) folds into the Rubredoxin-like domain. Fe cation contacts are provided by Cys-469, Cys-472, Cys-502, and Cys-505.

It in the N-terminal section; belongs to the zinc metallo-hydrolase group 3 family. As to quaternary structure, homotetramer. Requires Fe cation as cofactor. It depends on FMN as a cofactor.

It is found in the cytoplasm. The protein operates within nitrogen metabolism; nitric oxide reduction. Anaerobic nitric oxide reductase; uses NADH to detoxify nitric oxide (NO), protecting several 4Fe-4S NO-sensitive enzymes. Has at least 2 reductase partners, only one of which (NorW, flavorubredoxin reductase) has been identified. NO probably binds to the di-iron center; electrons enter from the NorW at rubredoxin and are transferred sequentially to the FMN center and the di-iron center. Also able to function as an aerobic oxygen reductase. The polypeptide is Anaerobic nitric oxide reductase flavorubredoxin (Aeromonas salmonicida (strain A449)).